The sequence spans 237 residues: Flagellar brake protein YcgR (237 aa).

The PilZ domain maps to Gln108–Phe225.

The protein belongs to the YcgR family. Monomer. Interacts with the flagellar basal bodies.

The protein resides in the bacterial flagellum basal body. Its function is as follows. Acts as a flagellar brake, regulating swimming and swarming in a bis-(3'-5') cyclic diguanylic acid (c-di-GMP)-dependent manner. Binds 1 c-di-GMP dimer per subunit. Increasing levels of c-di-GMP lead to decreased motility. In Serratia proteamaculans (strain 568), this protein is Flagellar brake protein YcgR.